The sequence spans 710 residues: DNA topoisomerase 1 (710 aa).

The interval 1–22 (MPTSTKSKTKTTTKKKTTRKRV) is disordered. Positions 7–22 (SKTKTTTKKKTTRKRV) are enriched in basic residues. Residues 26–136 (KNLVIVESPA…EKNRVVFNEI (111 aa)) enclose the Toprim domain. 2 residues coordinate Mg(2+): Glu32 and Asp105. One can recognise a Topo IA-type catalytic domain in the interval 152–574 (DVDLVDAQQA…QFYKPFAKEL (423 aa)). The interval 186-191 (SAGRVQ) is interaction with DNA. Residue Tyr321 is the O-(5'-phospho-DNA)-tyrosine intermediate of the active site. 2 C4-type zinc fingers span residues 595–621 (CDVC…FPDC) and 635–663 (CPLC…YPDC). The C4-type 3; atypical zinc finger occupies 676-702 (CPKSGHFLVEKKVRGGGKQVVCSNDEC).

This sequence belongs to the type IA topoisomerase family. Monomer. Mg(2+) is required as a cofactor.

It carries out the reaction ATP-independent breakage of single-stranded DNA, followed by passage and rejoining.. Releases the supercoiling and torsional tension of DNA, which is introduced during the DNA replication and transcription, by transiently cleaving and rejoining one strand of the DNA duplex. Introduces a single-strand break via transesterification at a target site in duplex DNA. The scissile phosphodiester is attacked by the catalytic tyrosine of the enzyme, resulting in the formation of a DNA-(5'-phosphotyrosyl)-enzyme intermediate and the expulsion of a 3'-OH DNA strand. The free DNA strand then undergoes passage around the unbroken strand, thus removing DNA supercoils. Finally, in the religation step, the DNA 3'-OH attacks the covalent intermediate to expel the active-site tyrosine and restore the DNA phosphodiester backbone. The protein is DNA topoisomerase 1 of Lactococcus lactis subsp. lactis (strain IL1403) (Streptococcus lactis).